The chain runs to 362 residues: Probable peptidyl-prolyl cis-trans isomerase C27F1.06c (362 aa).

Ser-69 is subject to Phosphoserine. The segment at 144–274 is disordered; the sequence is DEFSSDEEEM…KVKGDGPAAK (131 aa). Acidic residues-rich tracts occupy residues 146 to 167 and 175 to 189; these read FSSD…EEEE and LNSD…EEEI. Residue Ser-177 is modified to Phosphoserine. Positions 190–218 are enriched in basic and acidic residues; that stretch reads LEKPVPKDEVAEKHSKDKLKKEEKEKKTA. Residues 276 to 362 enclose the PPIase FKBP-type domain; it reads KKRVSMRYIG…VFDVKLLAVN (87 aa).

Belongs to the FKBP-type PPIase family. FKBP3/4 subfamily.

It catalyses the reaction [protein]-peptidylproline (omega=180) = [protein]-peptidylproline (omega=0). Its function is as follows. PPIases accelerate the folding of proteins. It catalyzes the cis-trans isomerization of proline imidic peptide bonds in oligopeptides. This chain is Probable peptidyl-prolyl cis-trans isomerase C27F1.06c, found in Schizosaccharomyces pombe (strain 972 / ATCC 24843) (Fission yeast).